The primary structure comprises 429 residues: Enolase (429 aa).

Gln-167 serves as a coordination point for (2R)-2-phosphoglycerate. Residue Glu-209 is the Proton donor of the active site. Residues Asp-246, Glu-289, and Asp-316 each coordinate Mg(2+). (2R)-2-phosphoglycerate-binding residues include Lys-341, Arg-370, Ser-371, and Lys-392. Lys-341 serves as the catalytic Proton acceptor.

Belongs to the enolase family. In terms of assembly, component of the RNA degradosome, a multiprotein complex involved in RNA processing and mRNA degradation. Mg(2+) serves as cofactor.

The protein localises to the cytoplasm. The protein resides in the secreted. It localises to the cell surface. The catalysed reaction is (2R)-2-phosphoglycerate = phosphoenolpyruvate + H2O. It functions in the pathway carbohydrate degradation; glycolysis; pyruvate from D-glyceraldehyde 3-phosphate: step 4/5. Functionally, catalyzes the reversible conversion of 2-phosphoglycerate (2-PG) into phosphoenolpyruvate (PEP). It is essential for the degradation of carbohydrates via glycolysis. In Pseudomonas putida (strain ATCC 47054 / DSM 6125 / CFBP 8728 / NCIMB 11950 / KT2440), this protein is Enolase.